The sequence spans 438 residues: ATP-dependent protease ATPase subunit HslU (438 aa).

ATP contacts are provided by residues Val18, 60-65, Asp252, Glu317, and Arg389; that span reads GVGKTE.

This sequence belongs to the ClpX chaperone family. HslU subfamily. As to quaternary structure, a double ring-shaped homohexamer of HslV is capped on each side by a ring-shaped HslU homohexamer. The assembly of the HslU/HslV complex is dependent on binding of ATP.

It is found in the cytoplasm. Functionally, ATPase subunit of a proteasome-like degradation complex; this subunit has chaperone activity. The binding of ATP and its subsequent hydrolysis by HslU are essential for unfolding of protein substrates subsequently hydrolyzed by HslV. HslU recognizes the N-terminal part of its protein substrates and unfolds these before they are guided to HslV for hydrolysis. This chain is ATP-dependent protease ATPase subunit HslU, found in Saccharophagus degradans (strain 2-40 / ATCC 43961 / DSM 17024).